A 313-amino-acid polypeptide reads, in one-letter code: Olfactory receptor 4M2 (313 aa).

The Cytoplasmic segment spans residues 1–25 (METANYTKVTEFVLTGLSQTPEVQL). The helical transmembrane segment at 26–46 (VLFVIFLSFYLFILPGNILII) threads the bilayer. Residues 47 to 57 (CTISLDPHLTS) lie on the Extracellular side of the membrane. The helical transmembrane segment at 58–78 (PMYFLLANLAFLDIWYSSITA) threads the bilayer. Over 79 to 97 (PEMLIDFFVERKIISFDEC) the chain is Cytoplasmic. Cysteine 97 and cysteine 179 are joined by a disulfide. The helical transmembrane segment at 98–118 (IAQLFFLHFAGASEMFLLTVM) threads the bilayer. The Extracellular portion of the chain corresponds to 119-142 (AFDLYTAICRPLHYATIMNQRLCC). A helical transmembrane segment spans residues 143-163 (ILVALSWRGGFIHSIIQVALI). Residues 164–204 (VRLPFCGPNELDSYFCDITQVVRIACANTFPEELVMICSSG) are Cytoplasmic-facing. The chain crosses the membrane as a helical span at residues 205–225 (LISVVCLIALLMSYAFLLALL). Topologically, residues 226 to 238 (KKLSGSGENTNRA) are extracellular. The helical transmembrane segment at 239–259 (VSTCYSHITIVVLMFGPSIYI) threads the bilayer. Topologically, residues 260–270 (YARPFDSFSLD) are cytoplasmic. A helical membrane pass occupies residues 271 to 291 (KVVSVFNTLIFPLHNPIIYTL). Topologically, residues 292–313 (RNKEVKAAMRKLVTKYILCKEK) are extracellular.

Belongs to the G-protein coupled receptor 1 family.

The protein resides in the membrane. In terms of biological role, odorant receptor. In Homo sapiens (Human), this protein is Olfactory receptor 4M2.